Here is a 215-residue protein sequence, read N- to C-terminus: LysM and putative peptidoglycan-binding domain-containing protein 2 (215 aa).

Residues 1-40 (MADLSPAPALREGGPRAHRPSAPSPPPRSRSTSEPEEAEL) form a disordered region. An N-acetylalanine modification is found at A2. S5, S24, S33, and S57 each carry phosphoserine. The 45-residue stretch at 71–115 (VEHRVRAGDTLQGIALKYGVTMEQIKRANKLFTNDCIFLKKTLSI) folds into the LysM domain. Disordered regions lie at residues 135–176 (ESET…EVSA) and 195–215 (RKLK…LYHS). Positions 145–156 (QEEEPVVSEEEL) are enriched in acidic residues. Residues 157–169 (PPPSPQDPDPKPA) are compositionally biased toward pro residues. Basic and acidic residues predominate over residues 196–205 (KLKEESRDEE).

The protein is LysM and putative peptidoglycan-binding domain-containing protein 2 (Lysmd2) of Mus musculus (Mouse).